The chain runs to 98 residues: Sm-like protein LSM3B (98 aa).

Serine 2 bears the N-acetylserine mark. The 86-residue stretch at 11-96 (EPLDLIRLSL…VILVSPPLRT (86 aa)) folds into the Sm domain.

This sequence belongs to the snRNP Sm proteins family. In terms of assembly, component of the heptameric LSM1-LSM7 complex that forms a seven-membered ring structure with a donut shape. The LSM subunits are arranged in the order LSM1, LSM2, LSM3, LSM6, LSM5, LSM7 and LSM4. Component of the heptameric LSM2-LSM8 complex that forms a seven-membered ring structure with a donut shape. The LSM subunits are arranged in the order LSM8, LSM2, LSM3, LSM6, LSM5, LSM7 and LSM4. LSM3B subunit interacts only with its two neighboring subunits, LSM2 and LSM6A or LSM6B. Expressed in roots, leaves, stems, flowers and siliques.

Its subcellular location is the cytoplasm. The protein localises to the nucleus. In terms of biological role, component of LSM protein complexes, which are involved in RNA processing. Component of the cytoplasmic LSM1-LSM7 complex which is involved in mRNA degradation by promoting decapping and leading to accurate 5'-3' mRNA decay. The cytoplasmic LSM1-LSM7 complex regulates developmental gene expression by the decapping of specific development-related transcripts. Component of the nuclear LSM2-LSM8 complex which is involved splicing nuclear mRNAs. LSM2-LSM8 binds directly to the U6 small nuclear RNAs (snRNAs) and is essential for accurate splicing of selected development-related mRNAs through the stabilization of the spliceosomal U6 snRNA. Plays a critical role in the regulation of development-related gene expression. The sequence is that of Sm-like protein LSM3B from Arabidopsis thaliana (Mouse-ear cress).